The primary structure comprises 145 residues: Ribosomal RNA large subunit methyltransferase H (145 aa).

Residues Leu62, Gly94, and 113–118 contribute to the S-adenosyl-L-methionine site; that span reads LGQLTL.

It belongs to the RNA methyltransferase RlmH family. As to quaternary structure, homodimer.

It localises to the cytoplasm. The catalysed reaction is pseudouridine(1915) in 23S rRNA + S-adenosyl-L-methionine = N(3)-methylpseudouridine(1915) in 23S rRNA + S-adenosyl-L-homocysteine + H(+). Specifically methylates the pseudouridine at position 1915 (m3Psi1915) in 23S rRNA. This is Ribosomal RNA large subunit methyltransferase H from Deinococcus deserti (strain DSM 17065 / CIP 109153 / LMG 22923 / VCD115).